We begin with the raw amino-acid sequence, 350 residues long: Hydroxymethylglutaryl-CoA synthase (350 aa).

The active-site Proton donor/acceptor is the Glu83. Cys115 acts as the Acyl-thioester intermediate in catalysis. Residues Cys115 and Thr156 each coordinate (3S)-3-hydroxy-3-methylglutaryl-CoA. Arg204 is a binding site for CoA. Thr206 and His239 together coordinate (3S)-3-hydroxy-3-methylglutaryl-CoA. The Proton donor/acceptor role is filled by His239. A CoA-binding site is contributed by Lys244. Positions 271 and 301 each coordinate (3S)-3-hydroxy-3-methylglutaryl-CoA.

Belongs to the thiolase-like superfamily. Archaeal HMG-CoA synthase family. Interacts with acetoacetyl-CoA thiolase that catalyzes the precedent step in the pathway and with a DUF35 protein. The acetoacetyl-CoA thiolase/HMG-CoA synthase complex channels the intermediate via a fused CoA-binding site, which allows for efficient coupling of the endergonic thiolase reaction with the exergonic HMGCS reaction.

It catalyses the reaction acetoacetyl-CoA + acetyl-CoA + H2O = (3S)-3-hydroxy-3-methylglutaryl-CoA + CoA + H(+). It participates in metabolic intermediate biosynthesis; (R)-mevalonate biosynthesis; (R)-mevalonate from acetyl-CoA: step 2/3. Functionally, catalyzes the condensation of acetyl-CoA with acetoacetyl-CoA to form 3-hydroxy-3-methylglutaryl-CoA (HMG-CoA). Functions in the mevalonate (MVA) pathway leading to isopentenyl diphosphate (IPP), a key precursor for the biosynthesis of isoprenoid compounds that are building blocks of archaeal membrane lipids. The sequence is that of Hydroxymethylglutaryl-CoA synthase from Thermococcus kodakarensis (strain ATCC BAA-918 / JCM 12380 / KOD1) (Pyrococcus kodakaraensis (strain KOD1)).